A 481-amino-acid polypeptide reads, in one-letter code: Glutamate--tRNA ligase (481 aa).

The 'HIGH' region motif lies at 9-19; it reads PSPTGNLHIGT. The 'KMSKS' region signature appears at 247-251; the sequence is KLSKR. Residue lysine 250 participates in ATP binding.

It belongs to the class-I aminoacyl-tRNA synthetase family. Glutamate--tRNA ligase type 1 subfamily. As to quaternary structure, monomer.

The protein localises to the cytoplasm. The catalysed reaction is tRNA(Glu) + L-glutamate + ATP = L-glutamyl-tRNA(Glu) + AMP + diphosphate. Functionally, catalyzes the attachment of glutamate to tRNA(Glu) in a two-step reaction: glutamate is first activated by ATP to form Glu-AMP and then transferred to the acceptor end of tRNA(Glu). The chain is Glutamate--tRNA ligase from Trichormus variabilis (strain ATCC 29413 / PCC 7937) (Anabaena variabilis).